The following is a 459-amino-acid chain: Mitochondrial distribution and morphology protein 10 (459 aa).

This sequence belongs to the MDM10 family. In terms of assembly, component of the ER-mitochondria encounter structure (ERMES) or MDM complex, composed of MMM1, MDM10, MDM12 and MDM34. Associates with the mitochondrial outer membrane sorting assembly machinery SAM(core) complex.

It is found in the mitochondrion outer membrane. In terms of biological role, component of the ERMES/MDM complex, which serves as a molecular tether to connect the endoplasmic reticulum and mitochondria. Components of this complex are involved in the control of mitochondrial shape and protein biogenesis and may function in phospholipid exchange. MDM10 is involved in the late assembly steps of the general translocase of the mitochondrial outer membrane (TOM complex). Functions in the TOM40-specific route of the assembly of outer membrane beta-barrel proteins, including the association of TOM40 with the receptor TOM22 and small TOM proteins. Can associate with the SAM(core) complex as well as the MDM12-MMM1 complex, both involved in late steps of the major beta-barrel assembly pathway, that is responsible for biogenesis of all outer membrane beta-barrel proteins. May act as a switch that shuttles between both complexes and channels precursor proteins into the TOM40-specific pathway. Plays a role in mitochondrial morphology and in the inheritance of mitochondria. This Clavispora lusitaniae (strain ATCC 42720) (Yeast) protein is Mitochondrial distribution and morphology protein 10.